The following is a 538-amino-acid chain: Retinoblastoma-binding protein 5 (538 aa).

WD repeat units lie at residues 22-63 (DCIS…KIIS) and 64-103 (AHIHPVCSLCWSRDGHKLVSASTDNIVSQWDVLSGDCDQR). A Glycyl lysine isopeptide (Lys-Gly) (interchain with G-Cter in SUMO2) cross-link involves residue K129. 4 WD repeats span residues 148-188 (DDDS…LVAS), 196-235 (SNTTAIKSIEFARKGSCFLINTADRIIRVYDGREILTCGR), 249-291 (VNRT…KILH), and 293-331 (TRGELLLDVAWHPVRPIIASISSGVVSIWAQNQVENWSA). T252 bears the Phosphothreonine; by CDK1 mark. Positions 330-366 (SAFAPDFKELDENVEYEERESEFDIEDEDKSEPEQTG) are interaction with ASH2L. Residues 344-360 (EYEERESEFDIEDEDKS) show a composition bias toward acidic residues. The tract at residues 344–377 (EYEERESEFDIEDEDKSEPEQTGADAAEDEEVDV) is disordered. Phosphoserine is present on S350. The tract at residues 371-380 (EDEEVDVTSV) is interaction with WDR5. Phosphoserine occurs at positions 388 and 389. Residues 408 to 519 (VEDPEENPYG…LPLEGSTKGK (112 aa)) are disordered. The span at 479–490 (SKKKQAGRPKGS) shows a compositional bias: basic residues. The span at 491–510 (KGKEKDSPFKPKLYKGDRGL) shows a compositional bias: basic and acidic residues. Phosphoserine; by CDK1 is present on S497. Phosphoserine is present on S525.

Component of the SET1 complex, at least composed of the catalytic subunit (SETD1A or SETD1B), WDR5, WDR82, RBBP5, ASH2L/ASH2, CXXC1/CFP1, HCFC1 and DPY30. Core component of several methyltransferase-containing complexes including MLL1/MLL, MLL2/3 (also named ASCOM complex) and MLL4/WBP7. Each complex is at least composed of ASH2L, RBBP5, WDR5, DPY30, one or more specific histone methyltransferases (KMT2A/MLL1, KMT2D/MLL2, KMT2C/MLL3 and KMT2B/MLL4), and the facultative components PAGR1, BACC1, CHD8, E2F6, HCFC1, HCFC2, HSP70, INO80C, KDM6A, KANSL1, LAS1L, MAX, MCRS1, MEN1, MGA, MYST1/MOF, NCOA6, PAXIP1/PTIP, PELP1, PHF20, PRP31, RING2, RUVB1/TIP49A, RUVB2/TIP49B, SENP3, TAF1, TAF4, TAF6, TAF7, TAF9, TEX10 and alpha- and beta-tubulin. Component of a histone methylation complex composed of at least ZNF335, RBBP5, ASH2L and WDR5; the complex may have histone H3-specific methyltransferase activity, however does not have specificity for 'Lys-4' of histone H3. Interacts with ZNF335. Interacts with ASH2L; the interaction is direct. Interacts with WDR5; the interaction is direct. Components of the ZNF335-RBBP5-ASH2L-WDR5 histone methylation complex may associate with components of a nuclear receptor-mediated transcription complex to form a complex at least composed of ZNF335, HCFC1, CCAR2, EMSY, MKI67, RBBP5, ASH2L and WDR5. Within this complex interacts with EMSY. Found in a complex with RBBP5, ASH2L, DPY30, KMT2A, KMT2D and WDR5. Interacts with SETD1A. Interacts with WDR82.

It is found in the nucleus. In embryonic stem (ES) cells, plays a crucial role in the differentiation potential, particularly along the neural lineage, regulating gene induction and H3 'Lys-4' methylation at key developmental loci, including that mediated by retinoic acid. Does not affect ES cell self-renewal. Component or associated component of some histone methyltransferase complexes which regulates transcription through recruitment of those complexes to gene promoters. As part of the MLL1/MLL complex, involved in mono-, di- and trimethylation at 'Lys-4' of histone H3. Histone H3 'Lys-4' methylation represents a specific tag for epigenetic transcriptional activation. In association with ASH2L and WDR5, stimulates the histone methyltransferase activities of KMT2A, KMT2B, KMT2C, KMT2D, SETD1A and SETD1B. The protein is Retinoblastoma-binding protein 5 (Rbbp5) of Mus musculus (Mouse).